The following is a 343-amino-acid chain: Small ribosomal subunit biogenesis GTPase RsgA (343 aa).

Residues 1-32 form a disordered region; sequence MAKRRLSKRQVDRIRERQSQRLDTSVAAPDGK. The segment covering 9-20 has biased composition (basic and acidic residues); that stretch reads RQVDRIRERQSQ. In terms of domain architecture, CP-type G spans 109–273; it reads YGKLKPVAAN…CIDSPGIREF (165 aa). GTP-binding positions include 156 to 159 and 215 to 223; these read NKLD and GQSGVGKSS. 4 residues coordinate Zn(2+): Cys297, Cys302, His304, and Cys310.

Belongs to the TRAFAC class YlqF/YawG GTPase family. RsgA subfamily. As to quaternary structure, monomer. Associates with 30S ribosomal subunit, binds 16S rRNA. The cofactor is Zn(2+).

Its subcellular location is the cytoplasm. In terms of biological role, one of several proteins that assist in the late maturation steps of the functional core of the 30S ribosomal subunit. Helps release RbfA from mature subunits. May play a role in the assembly of ribosomal proteins into the subunit. Circularly permuted GTPase that catalyzes slow GTP hydrolysis, GTPase activity is stimulated by the 30S ribosomal subunit. This is Small ribosomal subunit biogenesis GTPase RsgA from Saccharophagus degradans (strain 2-40 / ATCC 43961 / DSM 17024).